Here is a 729-residue protein sequence, read N- to C-terminus: MGRRKKIVQECETLMNTPEQIRNIAIAAHVDHGKTTLTDNLLAGAGMISDDTAGEQLAMDTEEDEQERGITIDAANVSMTHEYEDTNHLINLIDTPGHVDFGGDVTRAMRAVDGALVVVDAVEGAMPQTETVLRQALREGVKPTLFINKVDRLISELQEGPEEMQKRLMSVIADVNELIRGMTEEMDDIDEDWTVSVEEGTVGFGSALYKWGVSMPSMQRTGMDFGDIMDLERSDKRQELHERTPLADVVLDMVCEHFPNPIDAQPRRIPRIWRGDDESEVAESMQFVDEDGEVVLMVTDIGVDPHAGEIAAGRVFSGTLEKGQELYVSGTAGKNRVQSVGIYMGGEREEVEEVPAGNIAAVTGLKDAIAGSTVSSVEMTPFESIDHISEPVITKSIEAKNMDDLPKLIETLRQVSKEDPTIQIEINEDTGEHLISGQGELHLEVQTQRIERNQGIPVNTGEPIVVYREAPQQPSREVEGISPNRHNRFYISVEPLEQDIVDAIKLGDASMDMPELERREALQEAGMEKETSQNVEHIHGTNVFIDDTKGIQHLNETMELLIEGLEEALNDGPLAAEPVQGSLIRLHDARLHEDAIHRGPAQVIPAMREAVHNSLIDAEIRLLEPIQNVRIDVPNAHMGAASGEIQGRRGRVDDMYQEGDLMVVEGVAPVDEMIGFSSDIRSATEGRASWNTENAGFQVMADNLQPDKIDEIRTRKGMKLELPETIDYF.

A tr-type G domain is found at 19–262 (EQIRNIAIAA…MVCEHFPNPI (244 aa)). GTP contacts are provided by residues 28–35 (AHVDHGKT), 94–98 (DTPGH), and 148–151 (NKVD). At His597 the chain carries Diphthamide.

This sequence belongs to the TRAFAC class translation factor GTPase superfamily. Classic translation factor GTPase family. EF-G/EF-2 subfamily.

The protein localises to the cytoplasm. In terms of biological role, catalyzes the GTP-dependent ribosomal translocation step during translation elongation. During this step, the ribosome changes from the pre-translocational (PRE) to the post-translocational (POST) state as the newly formed A-site-bound peptidyl-tRNA and P-site-bound deacylated tRNA move to the P and E sites, respectively. Catalyzes the coordinated movement of the two tRNA molecules, the mRNA and conformational changes in the ribosome. This chain is Elongation factor 2, found in Halomicrobium mukohataei (strain ATCC 700874 / DSM 12286 / JCM 9738 / NCIMB 13541) (Haloarcula mukohataei).